A 492-amino-acid chain; its full sequence is Cytochrome P450 26A1 (492 aa).

Cys437 is a binding site for heme.

Belongs to the cytochrome P450 family. Heme serves as cofactor.

It is found in the endoplasmic reticulum membrane. The protein resides in the microsome membrane. The catalysed reaction is all-trans-retinoate + reduced [NADPH--hemoprotein reductase] + O2 = all-trans-(4S)-hydroxyretinoate + oxidized [NADPH--hemoprotein reductase] + H2O + H(+). It carries out the reaction all-trans-(4S)-hydroxyretinoate + reduced [NADPH--hemoprotein reductase] + O2 = all-trans-(4S,16)-dihydroxyretinoate + oxidized [NADPH--hemoprotein reductase] + H2O + H(+). It catalyses the reaction all-trans-retinoate + reduced [NADPH--hemoprotein reductase] + O2 = all-trans-18-hydroxyretinoate + oxidized [NADPH--hemoprotein reductase] + H2O + H(+). Functionally, a cytochrome P450 monooxygenase involved in the metabolism of retinoates (RAs), the active metabolites of vitamin A, and critical signaling molecules in animals. RAs exist as at least four different isomers: all-trans-RA (atRA), 9-cis-RA, 13-cis-RA, and 9,13-dicis-RA, where atRA is considered to be the biologically active isomer, although 9-cis-RA and 13-cis-RA also have activity. Catalyzes the hydroxylation of atRA primarily at C-4 and C-18, thereby contributing to the regulation of atRA homeostasis and signaling. Hydroxylation of atRA limits its biological activity and initiates a degradative process leading to its eventual elimination. Involved in the convertion of atRA to all-trans-4-oxo-RA. Able to metabolize other RAs such as 9-cis, 13-cis and 9,13-di-cis RA. Can oxidize all-trans-13,14-dihydroretinoate (DRA) to metabolites which could include all-trans-4-oxo-DRA, all-trans-4-hydroxy-DRA, all-trans-5,8-epoxy-DRA, and all-trans-18-hydroxy-DRA. May play a role in the oxidative metabolism of xenobiotics such as tazarotenic acid. This Gallus gallus (Chicken) protein is Cytochrome P450 26A1 (CYP26A1).